The sequence spans 186 residues: dITP/XTP pyrophosphatase (186 aa).

Residue Thr7 to Lys12 coordinates substrate. Residues Glu36 and Asp65 each contribute to the Mg(2+) site. Asp65 acts as the Proton acceptor in catalysis. Substrate is bound by residues Ser66, Phe140–Asp143, Lys163, and His168–Arg169.

Belongs to the HAM1 NTPase family. Homodimer. Mg(2+) is required as a cofactor. The cofactor is Mn(2+).

It carries out the reaction XTP + H2O = XMP + diphosphate + H(+). The catalysed reaction is dITP + H2O = dIMP + diphosphate + H(+). The enzyme catalyses ITP + H2O = IMP + diphosphate + H(+). Functionally, pyrophosphatase that catalyzes the hydrolysis of nucleoside triphosphates to their monophosphate derivatives, with a high preference for the non-canonical purine nucleotides XTP (xanthosine triphosphate), dITP (deoxyinosine triphosphate) and ITP. Seems to function as a house-cleaning enzyme that removes non-canonical purine nucleotides from the nucleotide pool, thus preventing their incorporation into DNA/RNA and avoiding chromosomal lesions. The protein is dITP/XTP pyrophosphatase of Pyrococcus horikoshii (strain ATCC 700860 / DSM 12428 / JCM 9974 / NBRC 100139 / OT-3).